Reading from the N-terminus, the 1606-residue chain is E3 ubiquitin-protein ligase HECW1 (1606 aa).

Residues S182–V318 enclose the C2 domain. 4 disordered regions span residues D349–E418, A459–P538, L566–G672, and S730–P815. Residues S354 to M373 show a composition bias toward polar residues. Positions P380 to K392 are enriched in basic and acidic residues. 2 stretches are compositionally biased toward acidic residues: residues E500 to D511 and A579 to E588. The span at S589–L600 shows a compositional bias: basic and acidic residues. Residues A612 to E621 are compositionally biased toward acidic residues. Polar residues-rich tracts occupy residues H651 to R663, D751 to G765, and H806 to P815. The region spanning E829 to A862 is the WW 1 domain. A coiled-coil region spans residues R870–S901. Phosphoserine occurs at positions 874, 937, and 939. The segment at T894–L938 is disordered. Positions L1018–I1051 constitute a WW 2 domain. Residues S1271 to E1606 form the HECT domain. C1574 functions as the Glycyl thioester intermediate in the catalytic mechanism.

In terms of assembly, interacts with DVL1 and SSR3. Also interacts with mutant SOD1. In terms of tissue distribution, predominantly expressed in neurons of adult and fetal brain. Weakly expressed in the kidney.

Its subcellular location is the cytoplasm. It catalyses the reaction S-ubiquitinyl-[E2 ubiquitin-conjugating enzyme]-L-cysteine + [acceptor protein]-L-lysine = [E2 ubiquitin-conjugating enzyme]-L-cysteine + N(6)-ubiquitinyl-[acceptor protein]-L-lysine.. It participates in protein modification; protein ubiquitination. E3 ubiquitin-protein ligase that mediates ubiquitination and subsequent degradation of DVL1. Also targets the mutant SOD1 protein involved in familial amyotrophic lateral sclerosis (FALS). Forms cytotoxic aggregates with DVL1, SSR3 and mutant SOD1 that lead to motor neuron death in FALS. This Homo sapiens (Human) protein is E3 ubiquitin-protein ligase HECW1 (HECW1).